Consider the following 423-residue polypeptide: G-protein coupled receptor 83 (423 aa).

An N-terminal signal peptide occupies residues 1–16; sequence MVPHLLLLCLLPLVRA. Over 18–71 the chain is Extracellular; it reads EPHEGRADEQSAEAALAVPNASHFFSWNNYTFSDWQNFVGRRRYGAESQNPTVK. N-linked (GlcNAc...) asparagine glycans are attached at residues N37 and N46. Residues 72–92 form a helical membrane-spanning segment; that stretch reads ALLIVAYSFIIVFSLFGNVLV. At 93 to 107 the chain is on the cytoplasmic side; the sequence is CHVIFKNQRMHSATS. A helical membrane pass occupies residues 108-129; that stretch reads LFIVNLAVADIMITLLNTPFTL. The Extracellular portion of the chain corresponds to 130–145; the sequence is VRFVNSTWIFGKGMCH. The N-linked (GlcNAc...) asparagine glycan is linked to N134. Residues C144 and C224 are joined by a disulfide bond. The helical transmembrane segment at 146–167 threads the bilayer; the sequence is VSRFAQYCSLHVSALTLTAIAV. At 168-186 the chain is on the cytoplasmic side; it reads DRHQVIMHPLKPRISITKG. Residues 187–208 traverse the membrane as a helical segment; that stretch reads VIYIAVIWTMATFFSLPHAICQ. Residues 209 to 238 are Extracellular-facing; sequence KLFTFKYSEDIVRSLCLPDFPEPADLFWKY. A helical membrane pass occupies residues 239-260; the sequence is LDLATFILLYILPLLIISVAYA. Topologically, residues 261 to 293 are cytoplasmic; it reads RVAKKLWLCNMIGDVTTEQYFALRRKKKKTIKM. A helical membrane pass occupies residues 294-315; the sequence is LMLVVVLFALCWFPLNCYVLLL. At 316-327 the chain is on the extracellular side; it reads SSKVIRTNNALY. A helical transmembrane segment spans residues 328–348; sequence FAFHWFAMSSTCYNPFIYCWL. Topologically, residues 349–423 are cytoplasmic; the sequence is NENFRIELKA…SSVEPIVTMS (75 aa). Polar residues predominate over residues 402–414; it reads PTSQLQSGKTDLS. The segment at 402-423 is disordered; sequence PTSQLQSGKTDLSSVEPIVTMS.

The protein belongs to the G-protein coupled receptor 1 family. Highly expressed in the brain and spinal cord, and found in lower concentrations in the thymus and other tissues.

It is found in the cell membrane. Its function is as follows. G-protein coupled receptor for PEN, a neuropeptide produced from the precursor protein, proSAAS (encoded by PCSK1N). Acts through a G(i)- and G(q)-alpha-alpha-mediated pathway in response to PEN. Plays a role in food intake and body weight regulation. May contribute to the regulation of anxiety-related behaviors. In Homo sapiens (Human), this protein is G-protein coupled receptor 83.